Here is a 236-residue protein sequence, read N- to C-terminus: Sperm flagellar protein 1 (236 aa).

The Calponin-homology (CH) domain maps to 7-112; it reads EEALHQLYLW…VLIPLRQRLE (106 aa). Positions 115–176 are disordered; sequence QRRRKQGAGS…PRPPAYNRAL (62 aa). The interval 183–236 is essential for homodimerization and microtubule bundling activity; sequence VLQIAEKEQELLASQETVQVLQMKVRRLEHLLQLKNVRIEDLSRRLQQAERKQR.

As to quaternary structure, homodimer. Interacts with actin, TJP1, CGN and CDH1. In terms of tissue distribution, expressed in the intestinal epithelial cells (at protein level).

The protein localises to the cytoplasm. The protein resides in the cell projection. It is found in the cilium. Its subcellular location is the flagellum. It localises to the cytoskeleton. The protein localises to the cilium axoneme. The protein resides in the apical cell membrane. It is found in the basolateral cell membrane. Its subcellular location is the stress fiber. It localises to the microvillus. The protein localises to the lamellipodium. The protein resides in the filopodium. Microtubule-associated protein involved in the stabilization of microtubules along the axis of migration during radial intercalation. Promotes the establishment and stabilization of an axis of microtubules required for the active migration of cells into the outer epithelium. Microtubule-associated protein that promotes microtubule bundling and stabilizes microtubules against depolymerization in response to cold shock. Essential for ciliary central apparatus formation which requires both its microtubule-binding and bundling activities and for ciliary localization of HYDIN and SPAG6 in ependymal cilia. Binds actin in intestinal epithelial cells (IECs), essential for IECs survival and contributes to formation of filopodia and lamellipodia in migrating IECs. Regulates planar cell polarity signaling pathway and asymmetric microtubule accumulation in ciliated epithelia. This chain is Sperm flagellar protein 1 (SPEF1), found in Homo sapiens (Human).